The following is a 567-amino-acid chain: Type II secretion system protein E (567 aa).

325–332 (GPTGSGKT) is a binding site for ATP.

It belongs to the GSP E family. In terms of assembly, forms homooligomers; most probably hexamers. Interacts with XpsL/GspL.

It is found in the cell inner membrane. It carries out the reaction ATP + H2O + cellular proteinSide 1 = ADP + phosphate + cellular proteinSide 2.. ATPase component of the type II secretion system required for the energy-dependent secretion of extracellular factors such as proteases and toxins from the periplasm. Acts as a molecular motor to provide the energy that is required for assembly of the pseudopilus and the extrusion of substrates generated in the cytoplasm. This is Type II secretion system protein E (xpsE) from Xanthomonas campestris pv. campestris (strain ATCC 33913 / DSM 3586 / NCPPB 528 / LMG 568 / P 25).